The sequence spans 334 residues: NAC domain-containing protein 66 (334 aa).

The NAC domain maps to 11-175 (VPPGFRFHPT…GWVVCRVFKK (165 aa)). A DNA-binding region spans residues 111–181 (IGMRKTLVFY…VFKKNNLCKN (71 aa)).

As to expression, mostly expressed in anthers. Also present in pollen, base of siliques and inflorescence stems.

It localises to the nucleus. Its function is as follows. Transcription activator of genes involved in biosynthesis of secondary walls. Together with NST1, required for the secondary cell wall thickening of the anther endocethium, which is necessary for anther dehiscence. May also regulate the secondary cell wall lignification of other tissues such as tracheary elements. In Arabidopsis thaliana (Mouse-ear cress), this protein is NAC domain-containing protein 66 (NAC066).